Reading from the N-terminus, the 297-residue chain is Acetyl-coenzyme A carboxylase carboxyl transferase subunit beta (297 aa).

Residues 27 to 296 (LWHKCPSCEA…PEAAKEVAAV (270 aa)) enclose the CoA carboxyltransferase N-terminal domain. Zn(2+) is bound by residues C31, C34, C50, and C53. The C4-type zinc-finger motif lies at 31-53 (CPSCEAVLYRPELEKTLDVCPKC).

The protein belongs to the AccD/PCCB family. Acetyl-CoA carboxylase is a heterohexamer composed of biotin carboxyl carrier protein (AccB), biotin carboxylase (AccC) and two subunits each of ACCase subunit alpha (AccA) and ACCase subunit beta (AccD). Requires Zn(2+) as cofactor.

Its subcellular location is the cytoplasm. It carries out the reaction N(6)-carboxybiotinyl-L-lysyl-[protein] + acetyl-CoA = N(6)-biotinyl-L-lysyl-[protein] + malonyl-CoA. The protein operates within lipid metabolism; malonyl-CoA biosynthesis; malonyl-CoA from acetyl-CoA: step 1/1. Functionally, component of the acetyl coenzyme A carboxylase (ACC) complex. Biotin carboxylase (BC) catalyzes the carboxylation of biotin on its carrier protein (BCCP) and then the CO(2) group is transferred by the transcarboxylase to acetyl-CoA to form malonyl-CoA. The sequence is that of Acetyl-coenzyme A carboxylase carboxyl transferase subunit beta from Pseudomonas entomophila (strain L48).